Consider the following 153-residue polypeptide: Glucose-6-phosphate 1-dehydrogenase (153 aa).

2 residues coordinate NADP(+): Arg-21 and Lys-120. A D-glucose 6-phosphate-binding site is contributed by Lys-120.

The protein belongs to the glucose-6-phosphate dehydrogenase family.

It is found in the cytoplasm. The protein localises to the cytosol. The enzyme catalyses D-glucose 6-phosphate + NADP(+) = 6-phospho-D-glucono-1,5-lactone + NADPH + H(+). The protein operates within carbohydrate degradation; pentose phosphate pathway; D-ribulose 5-phosphate from D-glucose 6-phosphate (oxidative stage): step 1/3. In terms of biological role, cytosolic glucose-6-phosphate dehydrogenase that catalyzes the first and rate-limiting step of the oxidative branch within the pentose phosphate pathway/shunt, an alternative route to glycolysis for the dissimilation of carbohydrates and a major source of reducing power and metabolic intermediates for fatty acid and nucleic acid biosynthetic processes. The protein is Glucose-6-phosphate 1-dehydrogenase (ZW) of Sarcophaga bullata (Grey flesh fly).